The chain runs to 111 residues: Phosphoribosyl-ATP pyrophosphatase (111 aa).

It belongs to the PRA-PH family.

It localises to the cytoplasm. It carries out the reaction 1-(5-phospho-beta-D-ribosyl)-ATP + H2O = 1-(5-phospho-beta-D-ribosyl)-5'-AMP + diphosphate + H(+). It functions in the pathway amino-acid biosynthesis; L-histidine biosynthesis; L-histidine from 5-phospho-alpha-D-ribose 1-diphosphate: step 2/9. This Pseudomonas paraeruginosa (strain DSM 24068 / PA7) (Pseudomonas aeruginosa (strain PA7)) protein is Phosphoribosyl-ATP pyrophosphatase.